Here is a 609-residue protein sequence, read N- to C-terminus: Glutamine--fructose-6-phosphate aminotransferase [isomerizing] (609 aa).

Catalysis depends on Cys-2, which acts as the Nucleophile; for GATase activity. Residues 2–217 (CGIVGAIAGR…DGDTAEIRRD (216 aa)) form the Glutamine amidotransferase type-2 domain. SIS domains lie at 285-425 (AESV…LRGA) and 458-599 (WAEC…VDKP). Lys-604 acts as the For Fru-6P isomerization activity in catalysis.

As to quaternary structure, homodimer.

The protein resides in the cytoplasm. The enzyme catalyses D-fructose 6-phosphate + L-glutamine = D-glucosamine 6-phosphate + L-glutamate. Functionally, catalyzes the first step in hexosamine metabolism, converting fructose-6P into glucosamine-6P using glutamine as a nitrogen source. The sequence is that of Glutamine--fructose-6-phosphate aminotransferase [isomerizing] from Xylella fastidiosa (strain Temecula1 / ATCC 700964).